The following is a 299-amino-acid chain: Probable lipid kinase YegS (299 aa).

Residues 2 to 133 enclose the DAGKc domain; it reads AEFPASLLIL…IDMAQVNKQT (132 aa). ATP-binding positions include Thr-40, 66–72, and Thr-95; that span reads GDGTINE. Positions 215, 218, and 220 each coordinate Mg(2+). The Proton acceptor role is filled by Glu-271.

It belongs to the diacylglycerol/lipid kinase family. YegS lipid kinase subfamily. Mg(2+) serves as cofactor. Ca(2+) is required as a cofactor.

The protein localises to the cytoplasm. Its function is as follows. Probably phosphorylates lipids; the in vivo substrate is unknown. This is Probable lipid kinase YegS from Escherichia coli (strain K12 / MC4100 / BW2952).